The primary structure comprises 105 residues: Small ribosomal subunit protein uS10 (105 aa).

It belongs to the universal ribosomal protein uS10 family. As to quaternary structure, part of the 30S ribosomal subunit.

Functionally, involved in the binding of tRNA to the ribosomes. This Nitratidesulfovibrio vulgaris (strain DSM 19637 / Miyazaki F) (Desulfovibrio vulgaris) protein is Small ribosomal subunit protein uS10.